A 199-amino-acid chain; its full sequence is 7-methyl-GTP pyrophosphatase (199 aa).

Asp-73 functions as the Proton acceptor in the catalytic mechanism.

It belongs to the Maf family. YceF subfamily. A divalent metal cation is required as a cofactor.

The protein resides in the cytoplasm. The catalysed reaction is N(7)-methyl-GTP + H2O = N(7)-methyl-GMP + diphosphate + H(+). In terms of biological role, nucleoside triphosphate pyrophosphatase that hydrolyzes 7-methyl-GTP (m(7)GTP). May have a dual role in cell division arrest and in preventing the incorporation of modified nucleotides into cellular nucleic acids. The polypeptide is 7-methyl-GTP pyrophosphatase (Bordetella bronchiseptica (strain ATCC BAA-588 / NCTC 13252 / RB50) (Alcaligenes bronchisepticus)).